A 102-amino-acid polypeptide reads, in one-letter code: Small ribosomal subunit protein uS10 (102 aa).

A disordered region spans residues 33–59 (RMSGPIPLPTKRIRITTRKSPDGEGSA).

This sequence belongs to the universal ribosomal protein uS10 family. Part of the 30S ribosomal subunit.

Involved in the binding of tRNA to the ribosomes. This chain is Small ribosomal subunit protein uS10, found in Pyrococcus furiosus (strain ATCC 43587 / DSM 3638 / JCM 8422 / Vc1).